Reading from the N-terminus, the 250-residue chain is Large ribosomal subunit protein uL30 (250 aa).

It belongs to the universal ribosomal protein uL30 family.

The polypeptide is Large ribosomal subunit protein uL30 (RPL7) (Yarrowia lipolytica (strain CLIB 122 / E 150) (Yeast)).